Consider the following 267-residue polypeptide: Staphylococcal secretory antigen ssaA2 (267 aa).

A signal peptide spans 1–27 (MKKIATATIATAGFATIAIASGNQAHA). Repeat copies occupy residues 83 to 85 (YNN), 86 to 88 (YNN), 89 to 91 (YNN), 95 to 97 (YNN), 101 to 103 (YNN), 104 to 106 (YSN), and 113 to 115 (YNN). Residues 83–115 (YNNYNNYNNGYSYNNYSRYNNYSNNNQSYNYNN) are 7 X 3 AA repeats of Y-[NS]-N. The region spanning 146–267 (MAPSSNGRSI…SQAAGYNFIH (122 aa)) is the Peptidase C51 domain.

The protein resides in the secreted. Its function is as follows. Not known; immunogenic protein. The sequence is that of Staphylococcal secretory antigen ssaA2 (ssaA2) from Staphylococcus aureus (strain NCTC 8325 / PS 47).